A 315-amino-acid polypeptide reads, in one-letter code: Olfactory receptor 4A5 (315 aa).

At 1–23 (MRQNNNITEFVLLGFSQDPGVQK) the chain is on the extracellular side. N-linked (GlcNAc...) asparagine glycosylation is present at Asn6. A helical transmembrane segment spans residues 24–47 (ALFVMFLLTYLVTVVGNLLIVVDI). Topologically, residues 48-55 (IASPSLGS) are cytoplasmic. Residues 56-77 (PMYFFLACLSFIDAAYSTTISP) form a helical membrane-spanning segment. Residues 78 to 98 (KLIVGLFCDKKTISFQGCMGQ) lie on the Extracellular side of the membrane. Cys95 and Cys186 are disulfide-bonded. Residues 99–118 (LFIDHFFGGAEVFLLVVMAC) form a helical membrane-spanning segment. Residues 119-137 (DRYVAICKPLHYLTIMNRQ) are Cytoplasmic-facing. The helical transmembrane segment at 138–156 (VCFLLLVVAMIGGFVHSAF) threads the bilayer. Topologically, residues 157-192 (QIVVYSLPFCGPNVIVHFSCDMHPLLELACTDTYFI) are extracellular. Residues 193–216 (GLTVVVNSGAICMVIFNLLLISYG) form a helical membrane-spanning segment. The Cytoplasmic portion of the chain corresponds to 217 to 232 (VILSSLKTYSQEKRGK). A helical membrane pass occupies residues 233–255 (ALSTCSSGSTVVVLFFVPCIFIY). Topologically, residues 256–266 (VRPVSNFPTDK) are extracellular. Residues 267–286 (FMTVFYTIITHMLSPLIYTL) form a helical membrane-spanning segment. Residues 287–315 (RNSEMRNAIEKLLGKKLTIFIIGGVSVLM) are Cytoplasmic-facing.

The protein belongs to the G-protein coupled receptor 1 family.

The protein localises to the cell membrane. In terms of biological role, odorant receptor. The protein is Olfactory receptor 4A5 (OR4A5) of Homo sapiens (Human).